Reading from the N-terminus, the 389-residue chain is Mannitol-1-phosphate 5-dehydrogenase (389 aa).

Position 7-18 (7-18 (AVHFGGGNIGRG)) interacts with NAD(+). Lys-216 is an active-site residue.

It belongs to the mannitol dehydrogenase family. Monomer.

The enzyme catalyses D-mannitol 1-phosphate + NAD(+) = beta-D-fructose 6-phosphate + NADH + H(+). Functionally, catalyzes the NAD(H)-dependent interconversion of D-fructose 6-phosphate and D-mannitol 1-phosphate in the mannitol metabolic pathway. This is Mannitol-1-phosphate 5-dehydrogenase from Pyrenophora tritici-repentis (strain Pt-1C-BFP) (Wheat tan spot fungus).